Here is a 266-residue protein sequence, read N- to C-terminus: Early E1A protein (266 aa).

Residues 39–47 form an interaction with RB1 in competition with E2F1 region; sequence PSLYELYDL. The segment at 75–145 is interaction with UBE2I; that stretch reads EGLFLPEPPV…AAAAADRERE (71 aa). The short motif at 98–102 is the PXLXP motif, interaction with host ZMYND11 element; the sequence is PQLHP. Positions 107 to 111 match the LXCXE motif, interaction with host RB1 and TMEM173/STING motif; the sequence is LLCYE. A zinc finger lies at 159–179; that stretch reads CKSCEHHRNSTGNTDLMCSLC. Positions 195 to 226 are disordered; sequence NEPEPNSTLDGDERPSPPKLGSAVPEGVIKPV. A PXDLS motif, CTBP-binding motif is present at residues 255 to 259; sequence PVDLS. A Nuclear localization signal motif is present at residues 261–265; sequence KRPRC.

This sequence belongs to the adenoviridae E1A protein family. In terms of assembly, interacts with host UBE2I; this interaction interferes with polySUMOylation. Interacts with host RB1; this interaction induces the aberrant dissociation of RB1-E2F1 complex thereby disrupting the activity of RB1 and activating E2F1-regulated genes. Interacts with host ATF7; the interaction enhances ATF7-mediated viral transactivation activity which requires the zinc binding domains of both proteins. Isoform early E1A 32 kDa protein and isoform early E1A 26 kDa protein interact (via N-terminus) with CUL1 and E3 ubiquitin ligase RBX1; these interactions inhibit RBX1-CUL1-dependent elongation reaction of ubiquitin chains and attenuate ubiquitination of SCF(FBXW7) target proteins. Interacts (via PXLXP motif) with host ZMYND11/BS69 (via MYND-type zinc finger); this interaction inhibits E1A mediated transactivation. Interacts with host EP300; this interaction stimulates the acetylation of RB1 by recruiting EP300 and RB1 into a multimeric-protein complex. Interacts with host CTBP1 and CTBP2; this interaction seems to potentiate viral replication. Interacts with host DCAF7. Interacts with host DYRK1A. Interacts with host KPNA4; this interaction allows E1A import into the host nucleus. Interacts with host EP400; this interaction stabilizes MYC. Interacts with host TBP protein; this interaction probably disrupts the TBP-TATA complex. Interacts (via LXCXE motif) with host TMEM173/STING; this interaction impairs the ability of TMEM173/STING to sense cytosolic DNA and promote the production of type I interferon (IFN-alpha and IFN-beta). Interacts (via C-terminus) with host ZBED1/hDREF (via C-terminus); the interaction is direct.

Its subcellular location is the host nucleus. Its function is as follows. Plays a role in viral genome replication by driving entry of quiescent cells into the cell cycle. Stimulation of progression from G1 to S phase allows the virus to efficiently use the cellular DNA replicating machinery to achieve viral genome replication. E1A protein has both transforming and trans-activating activities. Induces the disassembly of the E2F1 transcription factor from RB1 by direct competition for the same binding site on RB1, with subsequent transcriptional activation of E2F1-regulated S-phase genes and of the E2 region of the adenoviral genome. Release of E2F1 leads to the ARF-mediated inhibition of MDM2 and causes TP53/p53 to accumulate because it is not targeted for degradation by MDM2-mediated ubiquitination anymore. This increase in TP53, in turn, would arrest the cell proliferation and direct its death but this effect is counteracted by the viral protein E1B-55K. Inactivation of the ability of RB1 to arrest the cell cycle is critical for cellular transformation, uncontrolled cellular growth and proliferation induced by viral infection. Interaction with RBX1 and CUL1 inhibits ubiquitination of the proteins targeted by SCF(FBXW7) ubiquitin ligase complex, and may be linked to unregulated host cell proliferation. The tumorigenesis-restraining activity of E1A may be related to the disruption of the host CtBP-CtIP complex through the CtBP binding motif. Interaction with host TMEM173/STING impairs the ability of TMEM173/STING to sense cytosolic DNA and promote the production of type I interferon (IFN-alpha and IFN-beta). Promotes the sumoylation of host ZBED1/hDREF with SUMO1. This Homo sapiens (Human) protein is Early E1A protein.